The following is a 229-amino-acid chain: Choline-phosphate cytidylyltransferase (229 aa).

Positions 6, 8, 9, 80, 82, 85, and 101 each coordinate CDP-choline. Position 102 (Asp102) interacts with Mg(2+). Tyr185 contributes to the CDP-choline binding site. Glu211 and Asp213 together coordinate Mg(2+).

It belongs to the LicC/PntC cytidylyltransferase family. In terms of assembly, monomer. Forms dimers in LicC-CDP-Cho-Mg(2+) crystals, but the monomer is probably the biologically functional unit. Mg(2+) serves as cofactor.

The enzyme catalyses phosphocholine + CTP + H(+) = CDP-choline + diphosphate. Its pathway is cell wall biogenesis; teichoic acid biosynthesis. It participates in cell wall biogenesis; lipoteichoic acid biosynthesis. Mg(2+) in slight excess of CTP gives maximal activity. Strongly inhibited by Ca(2+) and several other metal ions, such as Cd(2+), Co(2+), Cu(2+), Mn(2+), Ni(2+), Zn(2+) and Fe(2+). Also inhibited by Mg(2+) at high concentrations. CDP-Cho is a competitive inhibitor with respect to CTP, whereas diphosphate is a mixed-type inhibitor with respect to CTP. In terms of biological role, cytidylyltransferase involved in the biosynthesis of the phosphocholine containing cell wall constituents, teichoic acid and lipoteichoic acid, which are essential for cell separation and pathogenesis. Catalyzes the activation of phosphocholine (P-Cho) to CDP-choline (CDP-Cho). Can also use phosphoethanolamine and 2-aminoethylphosphonate, with much lower efficiency. Shows lower activity with dCTP, weak activity with ATP and no activity with GTP, TTP, UTP, dATP, dGTP and dTTP. The chain is Choline-phosphate cytidylyltransferase from Streptococcus pneumoniae (strain ATCC BAA-255 / R6).